A 161-amino-acid polypeptide reads, in one-letter code: Allophycocyanin alpha chain 2 (161 aa).

Asn-71 carries the N4-methylasparagine modification. Residue Cys-81 coordinates (2R,3E)-phycocyanobilin.

The protein belongs to the phycobiliprotein family. In terms of assembly, component of the phycobilisome. Heterodimer of an alpha and a beta chain. Post-translationally, contains one covalently linked bilin chromophore.

The protein resides in the cellular thylakoid membrane. Functionally, light-harvesting photosynthetic bile pigment-protein from the phycobiliprotein complex. Allophycocyanin has a maximum absorption at approximately 650 nanometers. In Microchaete diplosiphon (Fremyella diplosiphon), this protein is Allophycocyanin alpha chain 2 (apcA2).